The primary structure comprises 91 residues: Small ribosomal subunit protein bS20 (91 aa).

Disordered regions lie at residues methionine 1–lysine 26 and histidine 67–serine 91.

Belongs to the bacterial ribosomal protein bS20 family.

Its function is as follows. Binds directly to 16S ribosomal RNA. This is Small ribosomal subunit protein bS20 from Deinococcus deserti (strain DSM 17065 / CIP 109153 / LMG 22923 / VCD115).